Reading from the N-terminus, the 651-residue chain is Probable export ATP-binding/permease protein Pfl01_2215 (651 aa).

The ABC transporter domain maps to 6–244 (LQLTGISRSF…LSNEDAVPKS (239 aa)). ATP is bound at residue 42–49 (GASGSGKS). The next 5 helical transmembrane spans lie at 250–270 (LVAS…ALIS), 276–296 (LLTM…SAIG), 524–544 (LALL…IGVM), 585–605 (LGGA…SLFI), and 614–634 (LTSV…FGFV).

Belongs to the ABC transporter superfamily. Macrolide exporter (TC 3.A.1.122) family. In terms of assembly, probably part of a tripartite efflux system, which is composed of an inner membrane transporter, a periplasmic membrane fusion protein, and an outer membrane component.

It is found in the cell inner membrane. Its function is as follows. Probably part of a tripartite efflux system. This Pseudomonas fluorescens (strain Pf0-1) protein is Probable export ATP-binding/permease protein Pfl01_2215.